The primary structure comprises 359 residues: Archaemetzincin-2 (359 aa).

His-254 is a Zn(2+) binding site. Glu-255 (proton acceptor) is an active-site residue. Zn(2+) contacts are provided by His-258, His-264, Cys-265, Cys-270, Cys-289, and Cys-292.

This sequence belongs to the peptidase M54 family. Zn(2+) serves as cofactor. In terms of tissue distribution, predominantly expressed in testis.

Its function is as follows. Probable zinc metalloprotease. The sequence is that of Archaemetzincin-2 (Amz2) from Mus musculus (Mouse).